The chain runs to 266 residues: Undecaprenyl-diphosphatase (266 aa).

Transmembrane regions (helical) follow at residues 4–24, 46–66, 82–102, 105–125, 142–162, 182–202, 216–236, and 244–264; these read WLIALILGLIEGLTEFIPVSS, VLIQLGAILAITGVYFGRLWG, IGILLAFLPAVFVGVAAHDFI, VLYETPALVCSTLIIGGFILL, YPLKTAFIIGLFQCLALVPGV, AAEFSFFLAMPTMAGAFAYDL, LIGIGFLAALVSGVFVVKTVL, and FAPFAYWRIAVGVVGLALLYI.

This sequence belongs to the UppP family.

The protein localises to the cell inner membrane. It carries out the reaction di-trans,octa-cis-undecaprenyl diphosphate + H2O = di-trans,octa-cis-undecaprenyl phosphate + phosphate + H(+). Functionally, catalyzes the dephosphorylation of undecaprenyl diphosphate (UPP). Confers resistance to bacitracin. This Caulobacter vibrioides (strain ATCC 19089 / CIP 103742 / CB 15) (Caulobacter crescentus) protein is Undecaprenyl-diphosphatase.